The chain runs to 3097 residues: MAARRCLNQLRQRYITNRFNICTCAIFLISLPFILAIEETTFAGLSAENAARMLAGSPGDVEKSSLSHHSEMSLVLPHDTYPGFSIKKFKTHPVKINGSSHSGAAAYHMLDTDYSKYFTVLEDGVVMTTADISPLVNRPVQLVVVEQTPNATNTHNLQLFVMHRNDMLRFSGSLLDASGEVRENQPAGTRVRGVPLMQAFSGSILDEELATPKKVRYTIIDGNVDDAFALQERKANKNIQISAKSLVINGDDESGVWLVTNRPLDREERAHYDLSVEASDVDGLDRTVSKIQITVLDENDNRPIFKSLDYKFAIAGQKSASMESNSSVTYQRFAIMGKVEATDADGDKIAYRLKSPSNVVIIVPQTGEIMLAGEPTSNELLIEVIAHDLRYPSLVSAKPAKVLLEFLAAEPVSFIMQHLEHDDINNHSHHREKRRVTRAVRPTKRIEFTEADGDTEGKSVFQLEKETDKETFKIRDDNPWVTVETNGAVRVKKKWDYEELGPEKTIDFWVIITNMGHNAGIKYTDNQRVIILVKDVNDEPPYFINRPLPMQAVVQLNAPPNTPVFTLQARDPDTDHNIHYFIVRDRTGGRFEVDERSGVVRTRGTDLFQLDMEYVLYVKAEDQNGKVDDRRFQSTPEERLSIVGGKRAPQFYMPSYEAEIPENQKKDSDIISIKAKSFADREIRYTLKAQGQGAGTFNIGPTSGIVKLAKELDFEDLRQPHVYSLIVTATEDSGGFSTSVDLTIRVTDVNDNAPKFELPDYQAHNVDEDIPLGTSILRVKAMDSDSGSNAEIEYLVSDDHFAVDSNGIIVNNKQLDADNNNAYYEFIVTAKDKGEPPKSGVATVRVYTKNKNDEEPKFSQQVYTPNVDENAGPNTLVTTVVASDKDGDNVRFGFVGGGTSSGQFVIEDITGVIRLHNKAISLDKDKYELNVTAMDDGSCCVNGDQTIHTSTAVVVVFITDVNDNKPVFKDCSTYYPKVEEGAPNGSPVIKVVATDEDKGVNGQVKYSIVQQPNQKGTKFTVDEETGEVSTNKVFDREGDDGKFVSVTVKATDQGDPSLEGVCSFTVEITDVNDNPPLFDRQKYVENVKQDASIGTNILRVSASDEDADNNGAIVYSLTAPFNPNDLEYFEIQAESGWIVLKKPLDRETYKLEAMAQDKGYPPLSRTVEVQIDVVDRANNPPVWDHTVYGPIYVKENMPVGGKVVSIKASSGIEGNPTVFYRLMPGSTAQTNKFHTFYLQQRPDNGDTWADIKVNHPLDYESIKEYNLTIRVENNGAQQLASEATVYIMLEDVNDEIPLFTEREQETVLEGEPIGTKVTQVNAIDKDGTFPNNQVYYYIVDSPRNEGKEFFEINLQSGEIFTKTVFDREKKGAYALEVEARDGAPSARPNSNGPNSVTKFIRIGIADKNDNPPYFDKSLYEAEVDENEDIQHTVLTVTAKDHDESSRIRYEITSGNIGGAFAVKNMTGAIYVAGALDYETRRRYELRLAASDNLKENYTTVIIHVKDVNDNPPVFERPTYRTQITEEDDRNLPKRVLQVTATDGDKDRPQNIVYFLTGQGIDPDNPANSKFDINRTTGEIFVLKPLDRDQPNGRPQWRFTVFAQDEGGEGLVGYADVQVNLKDINDNAPIFPQGVYFGNVTENGTAGMVVMTMTAVDYDDPNEGSNARLVYSIEKNVIEEETGSPIFEIEPDTGVIKTAVCCLDRERTPDYSIQVVAMDGGGLKGTGTASIRVKDINDMPPQFTKDEWFTEVDETDGTALPEMPILTVTVHDEDETNKFQYKVIDNSGYGADKFTMVRNNDGTGSLKIVQPLDYEDQLQSNGFRFRIQVNDKGEDNDNDKYHVAYSWVVVKLRDINDNKPHFERANVEVSVFEDTKVGTELEKFKATDPDQGGKSKVSYSIDRSSDRQRQFAINQNGSVTIQRSLDREVVPRHQVKILAIDDGSPPKTATATLTVIVQDINDNAPKFLKDYRPVLPEHVPPRKVVEILATDDDDRSKSNGPPFQFRLDPSADDIIRASFKVEQDQKGANGDGMAVISSLRSFDREQQKEYMIPIVIKDHGSPAMTGTSTLTVIIGDVNDNKMQPGSKDIFVYNYQGQSPDTPIGRVYVYDLDDWDLPDKKFYWEAMEHPRFKLDEDSGMVTMRAGTREGRYHLRFKVYDRKHTQTDIPANVTVTVREIPHEAVVNSGSVRLSGISDEDFIRVWNYRTQSMSRSKMDRFRDKLADLLNTERENVDIFSVQLKRKHPPLTDVRFSAHGSPYYKPVRLNGIVLMHREEIEKDVGINITMVGIDECLYENQMCEGSCTNSLEISPLPYMVNANKTALVGVRVDTIADCTCGARNFTKPESCRTTPCHNGGRCVDTRFGPHCSCPVGYTGPRCQQTTRSFRGNGWAWYPPLEMCDESHLSLEFITRKPDGLIIYNGPIVPPERDETLISDFIALELERGYPRLLIDFGSGTLELRVKTKKTLDDGEWHRIDLFWDTESIRMVVDFCKSAEIAEMEDGTPPEFDDMSCQARGQIPPFNEYLNVNAPLQVGGLYREQFDQSLYFWHYMPTAKGFDGCIRNLVHNSKLYDLAHPGLSRNSVAGCPQTEEVCAQTETTARCWEHGNCVGSLSEARCHCRPGWTGPACNIPTIPTTFKAQSYVKYALSFEPDRFSTQVQLRFRTREEYGELFRVSDQHNREYGILEIKDGHLHFRYNLNSLRTEEKDLWLNAIVVNDGQWHVVKVNRYGSAATLELDGGEGRRYNETFEFVGHQWLLVDKQEGVYAGGKAEYTGVRTFEVYADYQKSCLDDIRLEGKHLPLPPAMNGTQWGQATMARNLEKGCPSNKPCSNVICPDPFECVDLWNVYECTCGEGRIMSPDSKGCMDRNECLDMPCMNGATCINLEPRLRYRCICPDGFWGENCELVQEGQTLKLSMGALAAILVCLLIILILVLVFVVYNRRREAHIKYPGPDDDVRENIINYDDEGGGEDDMTAFDITPLQIPIGGPMPPELAPMKMPIMYPVMTLMPGQEPNVGMFIEEHKKRADGDPNAPPFDDLRNYAYEGGGSTAGSLSSLASGTDDEQQEYDYLGAWGPRFDKLANMYGPEAPNPHNTELEL.

A signal peptide spans 1–36; sequence MAARRCLNQLRQRYITNRFNICTCAIFLISLPFILA. Residues N97 and N150 are each glycosylated (N-linked (GlcNAc...) asparagine). One can recognise a Cadherin 1 domain in the interval 181–305; that stretch reads VRENQPAGTR…LDENDNRPIF (125 aa). N-linked (GlcNAc...) asparagine glycans are attached at residues N325 and N426. 15 consecutive Cadherin domains span residues 430-543, 554-651, 660-756, 766-858, 867-968, 978-1078, 1087-1183, 1193-1299, 1307-1414, 1423-1514, 1523-1630, 1639-1742, 1749-1861, 1870-1966, and 1974-2085; these read HREK…PPYF, VQLN…APQF, IPEN…APKF, VDED…EPKF, VDEN…KPVF, VEEG…PPLF, VKQD…PPVW, VKEN…IPLF, VLEG…PPYF, VDEN…PPVF, ITEE…APIF, VTEN…PPQF, TEVD…KPHF, VFED…APKF, and LPEH…QPGS. N930 is a glycosylation site (N-linked (GlcNAc...) asparagine). N1266 is a glycosylation site (N-linked (GlcNAc...) asparagine). Cystine bridges form between C2346-C2357, C2351-C2366, C2368-C2377, C2559-C2585, C2592-C2607, C2601-C2616, C2618-C2627, C2787-C2822, C2869-C2880, C2874-C2891, and C2893-C2902. One can recognise an EGF-like 1 domain in the interval 2346 to 2377; it reads CRTTPCHNGGRCVDTRFGPHCSCPVGYTGPRC. Residues 2379–2585 form the Laminin G-like 1 domain; the sequence is QTTRSFRGNG…GLSRNSVAGC (207 aa). Residues 2592-2627 form the EGF-like 2 domain; it reads CAQTETTARCWEHGNCVGSLSEARCHCRPGWTGPAC. Residues 2631-2822 form the Laminin G-like 2 domain; that stretch reads TIPTTFKAQS…TMARNLEKGC (192 aa). One can recognise an EGF-like 3 domain in the interval 2869-2902; sequence CLDMPCMNGATCINLEPRLRYRCICPDGFWGENC. The chain crosses the membrane as a helical span at residues 2917-2937; the sequence is ALAAILVCLLIILILVLVFVV. At 2938–3097 the chain is on the cytoplasmic side; sequence YNRRREAHIK…PNPHNTELEL (160 aa).

In the embryo, the protein first appears in the mesoderm at stage 9 and is present in the myoblasts and muscle fibers by stage 12 and stage 14, respectively. At stage 12 the protein is also located in the axons of the entire CNS, but not in the glial cells. In third instar larvae protein is expressed in the CNS neuropile, photoreceptor axons and precursors of adult muscles.

Its subcellular location is the cell membrane. Cadherins are calcium-dependent cell adhesion proteins. They preferentially interact with themselves in a homophilic manner in connecting cells; cadherins may thus contribute to the sorting of heterogeneous cell types. May associate with arm neural isoform and participate in the transmission of developmental information. In Drosophila melanogaster (Fruit fly), this protein is Neural-cadherin (CadN).